A 111-amino-acid chain; its full sequence is Nucleoid-associated protein CT0805 (111 aa).

Belongs to the YbaB/EbfC family. Homodimer.

It localises to the cytoplasm. The protein localises to the nucleoid. Its function is as follows. Binds to DNA and alters its conformation. May be involved in regulation of gene expression, nucleoid organization and DNA protection. The protein is Nucleoid-associated protein CT0805 of Chlorobaculum tepidum (strain ATCC 49652 / DSM 12025 / NBRC 103806 / TLS) (Chlorobium tepidum).